The primary structure comprises 143 residues: Deoxyuridine 5'-triphosphate nucleotidohydrolase (143 aa).

Substrate contacts are provided by residues Arg63–Gly65, Asn76, Thr80–Asp82, and Lys90.

Belongs to the dUTPase family. Mg(2+) is required as a cofactor.

It catalyses the reaction dUTP + H2O = dUMP + diphosphate + H(+). It functions in the pathway pyrimidine metabolism; dUMP biosynthesis; dUMP from dCTP (dUTP route): step 2/2. In terms of biological role, this enzyme is involved in nucleotide metabolism: it produces dUMP, the immediate precursor of thymidine nucleotides and it decreases the intracellular concentration of dUTP so that uracil cannot be incorporated into DNA. The protein is Deoxyuridine 5'-triphosphate nucleotidohydrolase of Finegoldia magna (strain ATCC 29328 / DSM 20472 / WAL 2508) (Peptostreptococcus magnus).